Consider the following 403-residue polypeptide: uncharacterized protein (403 aa).

2 helical membrane passes run 29–49 (FVIF…CGFL) and 55–75 (AFIA…FFGC).

This sequence belongs to the chlamydial CPn_0129/CT_036/TC_0306 family.

Its subcellular location is the cell membrane. This is an uncharacterized protein from Chlamydia trachomatis serovar D (strain ATCC VR-885 / DSM 19411 / UW-3/Cx).